The following is a 380-amino-acid chain: N-acetylneuraminate epimerase (380 aa).

The N-terminal stretch at 1 to 21 (MKFTKTALFTVLAATAFAAQA) is a signal peptide. Kelch repeat units lie at residues 42–86 (TVYV…AGVN), 88–140 (KLYV…AADG), 142–176 (KIYFVGGVNHEIWNGLFQDVKAAGGDKEKEKAIFD), 177–222 (PYFN…AIKD), 225–274 (LLVV…IAGG), 296–349 (ANYE…SYNN), and 351–380 (VLLIGGETDGGKPLSAVQTMSYDGKKLTVE). E231 (proton acceptor) is an active-site residue.

It belongs to the NanM family. Homodimer.

It localises to the periplasm. The enzyme catalyses N-acetyl-alpha-neuraminate = N-acetyl-beta-neuraminate. In terms of biological role, converts alpha-N-acetylneuranimic acid (Neu5Ac) to the beta-anomer, accelerating the equilibrium between the alpha- and beta-anomers. Probably facilitates sialidase-negative bacteria to compete successfully for limited amounts of extracellular Neu5Ac, which is likely taken up in the beta-anomer. In addition, the rapid removal of sialic acid from solution might be advantageous to the bacterium to damp down host responses. This is N-acetylneuraminate epimerase from Pasteurella multocida (strain Pm70).